The chain runs to 77 residues: Pi-stichotoxin-Hmg5a (77 aa).

Positions 1-21 (MDYQRLLFLFAVAMVITTTVA) are cleaved as a signal peptide. The propeptide occupies 22–34 (LPQDTALMDGQLQ). Cystine bridges form between Cys-40/Cys-73, Cys-42/Cys-66, and Cys-56/Cys-74.

This sequence belongs to the sea anemone type 3 (BDS) potassium channel toxin family.

Its subcellular location is the secreted. The protein localises to the nematocyst. Toxin that inhibits rat ASIC3 channels (IC(50)=13.8 uM). Also able to bind T.californica muscle-type nicotinic acetylcholine receptors (nAChR), and human alpha-7/CHRNA7 nicotinic acetylcholine receptors. This is Pi-stichotoxin-Hmg5a from Heteractis magnifica (Magnificent sea anemone).